The following is a 482-amino-acid chain: UDP-N-acetylmuramate--L-alanine ligase (482 aa).

123–129 (GTHGKTT) serves as a coordination point for ATP.

This sequence belongs to the MurCDEF family.

The protein localises to the cytoplasm. It carries out the reaction UDP-N-acetyl-alpha-D-muramate + L-alanine + ATP = UDP-N-acetyl-alpha-D-muramoyl-L-alanine + ADP + phosphate + H(+). Its pathway is cell wall biogenesis; peptidoglycan biosynthesis. Functionally, cell wall formation. The polypeptide is UDP-N-acetylmuramate--L-alanine ligase (Pseudomonas putida (strain GB-1)).